The chain runs to 845 residues: U-box domain-containing protein 52 (845 aa).

Disordered regions lie at residues 180-210 (RPSE…LPPE) and 229-258 (SPAL…EVST). Positions 187–204 (SGSIRFERSSSTSGSTDS) are enriched in low complexity. Residues 236-251 (MGSNAVAQMDTSSSGT) show a composition bias toward polar residues. A coiled-coil region spans residues 351-468 (SITDNQVNLN…REKDKLQASL (118 aa)). Positions 490–754 (FAENLKIGIG…DLKDQIIPAL (265 aa)) constitute a Protein kinase domain. ATP-binding positions include 496–504 (IGIGAYGSV) and Lys-517. Asp-612 serves as the catalytic Proton acceptor. Residues 774 to 845 (GPPSHFICPL…AIMEWKSNKR (72 aa)) form the U-box domain.

The protein belongs to the protein kinase superfamily. Ser/Thr protein kinase family.

The catalysed reaction is L-seryl-[protein] + ATP = O-phospho-L-seryl-[protein] + ADP + H(+). The enzyme catalyses L-threonyl-[protein] + ATP = O-phospho-L-threonyl-[protein] + ADP + H(+). It catalyses the reaction S-ubiquitinyl-[E2 ubiquitin-conjugating enzyme]-L-cysteine + [acceptor protein]-L-lysine = [E2 ubiquitin-conjugating enzyme]-L-cysteine + N(6)-ubiquitinyl-[acceptor protein]-L-lysine.. Its pathway is protein modification; protein ubiquitination. Functions as an E3 ubiquitin ligase. In Arabidopsis thaliana (Mouse-ear cress), this protein is U-box domain-containing protein 52 (PUB52).